We begin with the raw amino-acid sequence, 478 residues long: MSNNIRIEEDLLGTREVPADAYYGVHTLRAIENFYISNNKISDIPEFVRGMVMVKKAAAMANKELQTIPKSVANAIIAACDEVLNNGKCMDQFPVDVYQGGAGTSVNMNTNEVLANIGLELMGHQKGEYQYLNPNDHVNKCQSTNDAYPTGFRIAVYSSLIKLVDAINQLREGFERKAVEFQDILKMGRTQLQDAVPMTLGQEFRAFSILLKEEVKNIQRTAELLLEVNLGATAIGTGLNTPKEYSPLAVKKLAEVTGFPCVPAEDLIEATSDCGAYVMVHGALKRLAVKMSKICNDLRLLSSGPRAGLNEINLPELQAGSSIMPAKVNPVVPEVVNQVCFKVIGNDTTVTMAAEAGQLQLNVMEPVIGQAMFESVHILTNACYNLLEKCINGITANKEVCEGYVYNSIGIVTYLNPFIGHHNGDIVGKICAETGKSVREVVLERGLLTEAELDDIFSVQNLMHPAYKAKRYTDESEQ.

L-aspartate is bound by residues Thr104, Ser143, Thr144, Asn145, and Thr190. Residues 320 to 329 are SS loop; the sequence is GSSIMPAKVN. Residue Ser321 is the Proton acceptor of the active site. Positions 322 and 327 each coordinate L-aspartate.

It belongs to the class-II fumarase/aspartase family. Aspartase subfamily. As to quaternary structure, homotetramer.

The catalysed reaction is L-aspartate = fumarate + NH4(+). In terms of biological role, catalyzes the reversible conversion of L-aspartate to fumarate and ammonia. The chain is Aspartate ammonia-lyase (aspA) from Escherichia coli O157:H7.